A 499-amino-acid polypeptide reads, in one-letter code: MARFVVAGPSEYLAITGWGIDDVKLAKKAWVFAGQKCSRFDISPVNYEFNVEAMSSEKLAFNLPAVFTIGPKITPAPAPEVDGASNQRRVLMPESEEKLLLYAKLIAPHDHASNHVKQLVKGVIEGETRVLAASMTMEEIFQGTKKFKQEVFDQVQLDLNKFGLYIYNANVKQLVDEPGHEYFSYLGKKTQQEAANKAKVDVAEERMKGEVGAKEREGLTRQNAAKVDAETKVVSVRQQGIGLREEAKVKAEVQVYENEREAEIAAAQAGLAMKKAGWEKQSKVAQVEAVKAVAIREAELQMEVERKNALRLTEKLKAEQLSKATVQYETQVQESNAALYNRQKAADATLYEQVKSAEARKAQADAMFFEQKLAEDARLYAKQKEAEALAMVGKAKVEYVTSMLQALGGDYGALRDYLMIDGGMYQEMARVNASAVSGMQPKISIWSGADGAAGEAGAGAMQQVAGVYKMLPPLLSTVHEQTGMQPPAWMGSLPKDGAN.

Cysteine 37 carries the S-palmitoyl cysteine lipid modification. Residues 243 to 319 adopt a coiled-coil conformation; the sequence is LREEAKVKAE…LRLTEKLKAE (77 aa).

This sequence belongs to the band 7/mec-2 family. Flotillin subfamily. Post-translationally, may be palmitoylated.

The protein resides in the cell membrane. It is found in the membrane. The protein localises to the caveola. Its function is as follows. May act as a scaffolding protein within caveolar membranes, functionally participating in formation of caveolae or caveolae-like vesicles. The sequence is that of Flotillin-like protein 2 (FLOT2) from Oryza sativa subsp. japonica (Rice).